We begin with the raw amino-acid sequence, 74 residues long: Omwaprin-b (74 aa).

The N-terminal stretch at 1–24 (MSSGGLLLLLGLLTLWEVLTPVSS) is a signal peptide. The region spanning 27–71 (RPKKPGLCPPRPQKPCVKECKNDWSCPGQQKCCNYGCIDECRDPI) is the WAP domain. 4 disulfide bridges follow: C34–C59, C42–C63, C46–C58, and C52–C67.

It belongs to the venom waprin family. As to expression, expressed by the venom gland.

It localises to the secreted. In terms of biological role, damages membranes of susceptible bacteria. Has antibacterial activity against the Gram-positive bacteria B.megaterium and S.warneri. After 45 minutes of treatment with this protein, B.megaterium have no visible pili and are smooth. Has no antibacterial activity against the Gram-positive bacteria B.thuringiensis, S.aureus, S.clavuligerus and B. anthracis, or the Gram-negative bacteria E.coli and A.tumefaciens. Has no hemolytic activity. Does not inhibit the proteinases elastase and cathepsin G. Is not toxic to mice. In Oxyuranus microlepidotus (Inland taipan), this protein is Omwaprin-b.